We begin with the raw amino-acid sequence, 101 residues long: Small ribosomal subunit protein uS14 (101 aa).

Belongs to the universal ribosomal protein uS14 family. As to quaternary structure, part of the 30S ribosomal subunit. Contacts proteins S3 and S10.

Binds 16S rRNA, required for the assembly of 30S particles and may also be responsible for determining the conformation of the 16S rRNA at the A site. This chain is Small ribosomal subunit protein uS14, found in Cupriavidus metallidurans (strain ATCC 43123 / DSM 2839 / NBRC 102507 / CH34) (Ralstonia metallidurans).